Consider the following 355-residue polypeptide: Alanine racemase (355 aa).

The active-site Proton acceptor; specific for D-alanine is Lys-34. Lys-34 carries the post-translational modification N6-(pyridoxal phosphate)lysine. Residue Arg-133 coordinates substrate. The Proton acceptor; specific for L-alanine role is filled by Tyr-249. Position 297 (Met-297) interacts with substrate.

The protein belongs to the alanine racemase family. The cofactor is pyridoxal 5'-phosphate.

The enzyme catalyses L-alanine = D-alanine. The protein operates within amino-acid biosynthesis; D-alanine biosynthesis; D-alanine from L-alanine: step 1/1. Its function is as follows. Catalyzes the interconversion of L-alanine and D-alanine. May also act on other amino acids. This Rickettsia akari (strain Hartford) protein is Alanine racemase (alr).